Here is a 447-residue protein sequence, read N- to C-terminus: MGSTQLTGRVIFKGDPGYTEAIKNWNPYVDVYPLVFVFAQNSYDVSNAIKWARENKVPLRVRSGRHALDKNLSVVSGGIVIDVSDMNKVFLDEENAIATVQTGIPVGPLVKGLARDGFMAPFGDSPTVGIGGITMGGGFGVLSRSIGLISDNLLALKTVDAKGRIIHADQSHNEDLLWASRGGGGGNFGYNTQYTFKVHRAPKTATVFNIIWPWEQLETVFKAWQKWAPFVDERLGCYLEIYSKINGLCHAEGIFLGSKTELIRLLKPLLHAGTPTEADIKTLYYPDAIDFLDPDEPIPGRNDQSVKFSSAWGHDFWSDEPISIMRKFLEDATGTEANFFFINWGGAISRVPKDETAFFWRHPLFYTEWTASWKNKSQEDSNLASVERVRQLMQPYVAGSYVNVPDQNIENFGKEYYGANFARLREIKAKYDPENVFRFPQSIPPSR.

The FAD-binding PCMH-type domain maps to 29 to 201 (VDVYPLVFVF…TQYTFKVHRA (173 aa)).

Belongs to the oxygen-dependent FAD-linked oxidoreductase family. It depends on FAD as a cofactor.

It localises to the spore coat. This is an uncharacterized protein from Bacillus subtilis (strain 168).